Here is a 40-residue protein sequence, read N- to C-terminus: Alpha-conotoxin GIC (40 aa).

A propeptide spanning residues 1–20 is cleaved from the precursor; the sequence is SDGRNDAAKAFDLISSTVKK. Cystine bridges form between C22–C28 and C23–C36. The segment at 24 to 26 is ser-Xaa-Pro motif, crucial for potent interaction with nAChR; that stretch reads SHP. Position 36 is a cysteine amide (C36).

As to expression, expressed by the venom duct.

It is found in the secreted. Alpha-conotoxins bind to the nicotinic acetylcholine receptors (nAChR) and inhibit them. This toxin reversibly blocks neuronal nAChRs (alpha-3/beta-2 = alpha-6 or -3/beta-2 or -3 &gt; alpha-3/beta-4 = alpha-4/beta-2). This is Alpha-conotoxin GIC from Conus geographus (Geography cone).